Here is a 226-residue protein sequence, read N- to C-terminus: Thioredoxin domain-containing protein 9 (226 aa).

Residues 75 to 180 enclose the Thioredoxin domain; sequence EIGSERDFFQ…TTETLEWRLG (106 aa). Phosphoserine occurs at positions 188, 221, and 223.

As to quaternary structure, forms ternary complexes with the chaperonin TCP1 complex, spanning the cylindrical chaperonin cavity and contacting at least 2 subunits. As to expression, expressed in testis, liver, heart, kidney, brain, spleen and lung.

It is found in the cytoplasm. The protein localises to the nucleus. It localises to the cytoskeleton. The protein resides in the microtubule organizing center. Its subcellular location is the centrosome. It is found in the midbody. Its function is as follows. Significantly diminishes the chaperonin TCP1 complex ATPase activity, thus negatively impacts protein folding, including that of actin or tubulin. In Mus musculus (Mouse), this protein is Thioredoxin domain-containing protein 9 (Txndc9).